The sequence spans 234 residues: Large ribosomal subunit protein uL1 (234 aa).

This sequence belongs to the universal ribosomal protein uL1 family. As to quaternary structure, part of the 50S ribosomal subunit.

In terms of biological role, binds directly to 23S rRNA. The L1 stalk is quite mobile in the ribosome, and is involved in E site tRNA release. Functionally, protein L1 is also a translational repressor protein, it controls the translation of the L11 operon by binding to its mRNA. The chain is Large ribosomal subunit protein uL1 from Anaeromyxobacter dehalogenans (strain 2CP-C).